We begin with the raw amino-acid sequence, 213 residues long: dITP/XTP pyrophosphatase (213 aa).

7–12 (TSNLDK) lines the substrate pocket. The Proton acceptor role is filled by Asp74. Mg(2+) is bound at residue Asp74. Substrate contacts are provided by residues Ser75, 165-168 (FGYD), Lys188, and 193-194 (HR).

The protein belongs to the HAM1 NTPase family. As to quaternary structure, homodimer. The cofactor is Mg(2+).

The catalysed reaction is XTP + H2O = XMP + diphosphate + H(+). It catalyses the reaction dITP + H2O = dIMP + diphosphate + H(+). It carries out the reaction ITP + H2O = IMP + diphosphate + H(+). Functionally, pyrophosphatase that catalyzes the hydrolysis of nucleoside triphosphates to their monophosphate derivatives, with a high preference for the non-canonical purine nucleotides XTP (xanthosine triphosphate), dITP (deoxyinosine triphosphate) and ITP. Seems to function as a house-cleaning enzyme that removes non-canonical purine nucleotides from the nucleotide pool, thus preventing their incorporation into DNA/RNA and avoiding chromosomal lesions. The polypeptide is dITP/XTP pyrophosphatase (Campylobacter concisus (strain 13826)).